The following is a 335-amino-acid chain: Capsular polysaccharide phosphotransferase WcwK (335 aa).

It belongs to the stealth family.

The chain is Capsular polysaccharide phosphotransferase WcwK (wcwK) from Streptococcus pneumoniae.